Here is a 246-residue protein sequence, read N- to C-terminus: Tyrosine recombinase XerD-like (246 aa).

Residues 1–72 enclose the Core-binding (CB) domain; the sequence is MINDINNFIE…AVNQFLFFLY (72 aa). Residues 84 to 246 enclose the Tyr recombinase domain; that stretch reads QETEKITLTQ…TPITLERYYR (163 aa). Active-site residues include Lys149 and Arg212. The active-site O-(3'-phospho-DNA)-tyrosine intermediate is the Tyr244.

Belongs to the 'phage' integrase family. XerD-like subfamily.

The protein resides in the cytoplasm. Its function is as follows. Putative tyrosine recombinase. Not involved in the cutting and rejoining of the recombining DNA molecules on dif(SL) site. In Streptococcus agalactiae serotype III (strain NEM316), this protein is Tyrosine recombinase XerD-like.